The following is a 224-amino-acid chain: PKHD-type hydroxylase Shewmr7_0698 (224 aa).

The Fe2OG dioxygenase domain maps to 78–176; that stretch reads QFYPPLFNRY…RTAAFMWLQS (99 aa). Fe cation contacts are provided by His-96, Asp-98, and His-157. Arg-167 provides a ligand contact to 2-oxoglutarate.

The cofactor is Fe(2+). It depends on L-ascorbate as a cofactor.

This Shewanella sp. (strain MR-7) protein is PKHD-type hydroxylase Shewmr7_0698.